The following is a 160-amino-acid chain: Transcription elongation factor GreA (160 aa).

A coiled-coil region spans residues 8 to 28 (LTEEGLKQLEAELEHLIQVKR).

The protein belongs to the GreA/GreB family.

Necessary for efficient RNA polymerase transcription elongation past template-encoded arresting sites. The arresting sites in DNA have the property of trapping a certain fraction of elongating RNA polymerases that pass through, resulting in locked ternary complexes. Cleavage of the nascent transcript by cleavage factors such as GreA or GreB allows the resumption of elongation from the new 3'terminus. GreA releases sequences of 2 to 3 nucleotides. In Mycoplasma pneumoniae (strain ATCC 29342 / M129 / Subtype 1) (Mycoplasmoides pneumoniae), this protein is Transcription elongation factor GreA.